We begin with the raw amino-acid sequence, 636 residues long: uncharacterized protein (636 aa).

2 disordered regions span residues 1-22 and 81-107; these read MYNVRGDLNRKTPSDGNVNEIG and SSQTYNRYPNGGNSAGSDMYSTSPQNN. At 1–170 the chain is on the cytoplasmic side; sequence MYNVRGDLNR…YFVGGEGLMQ (170 aa). The helical; Signal-anchor for type II membrane protein transmembrane segment at 171-191 threads the bilayer; that stretch reads LLFLLFLAAGTGMLFIGLPIL. Topologically, residues 192-636 are lumenal; sequence TYTGHNSLAS…RPKNSLMDGC (445 aa). A GH16 domain is found at 218–587; it reads LRYGSLIDPD…YVRIYQDSSD (370 aa). N-linked (GlcNAc...) asparagine glycosylation is found at asparagine 291, asparagine 378, asparagine 429, asparagine 464, asparagine 489, and asparagine 616.

This sequence belongs to the SKN1/KRE6 family.

It localises to the endoplasmic reticulum membrane. Its function is as follows. Required for synthesis of the major beta-glucans of the yeast cell wall. This is an uncharacterized protein from Schizosaccharomyces pombe (strain 972 / ATCC 24843) (Fission yeast).